Consider the following 352-residue polypeptide: rRNA 2'-O-methyltransferase fibrillarin (352 aa).

Positions 1–115 (MGRPEFNRGG…GGAGGMRGGK (115 aa)) are disordered. 22 positions are modified to asymmetric dimethylarginine: Arg8, Arg16, Arg19, Arg23, Arg27, Arg35, Arg43, Arg51, Arg55, Arg58, Arg63, Arg67, Arg70, Arg75, Arg81, Arg85, Arg91, Arg95, Arg98, Arg102, Arg105, and Arg112. Gly residues predominate over residues 8–18 (RGGGGGGFRGG). Over residues 26-59 (SRGGFGGGGRGGYGGGDRGSFGGGDRGGFRGGRG) the composition is skewed to gly residues. Over residues 66–113 (FRGGRGGGDRGGFGGRGSPRGGFGGRGSPRGGRGSPRGGRGGAGGMRG) the composition is skewed to gly residues. S-adenosyl-L-methionine contacts are provided by residues 203 to 204 (TT), 222 to 223 (EF), 247 to 248 (DA), and 267 to 270 (DVAQ).

Belongs to the methyltransferase superfamily. Fibrillarin family. In terms of assembly, component of box C/D small nucleolar ribonucleoprotein (snoRNP) particles. It is associated with the U3, U8 and U13 small nuclear RNAs. In terms of processing, by homology to other fibrillarins, some or all of the N-terminal domain arginines are modified to asymmetric dimethylarginine (DMA).

The protein localises to the nucleus. It is found in the nucleolus. The protein resides in the nucleoplasm. The enzyme catalyses L-glutaminyl-[histone H2A] + S-adenosyl-L-methionine = N(5)-methyl-L-glutaminyl-[histone H2A] + S-adenosyl-L-homocysteine + H(+). Functionally, S-adenosyl-L-methionine-dependent methyltransferase that has the ability to methylate both RNAs and proteins. Involved in pre-rRNA processing. Utilizes the methyl donor S-adenosyl-L-methionine to catalyze the site-specific 2'-hydroxyl methylation of ribose moieties in pre-ribosomal RNA. Site specificity is provided by a guide RNA that base pairs with the substrate. Methylation occurs at a characteristic distance from the sequence involved in base pairing with the guide RNA. Also acts as a protein methyltransferase by mediating methylation of 'Gln-105' of histone H2A (H2AQ105me), a modification that impairs binding of the FACT complex and is specifically present at 35S ribosomal DNA locus. Plays a role in modulation of nucleolus size most likely through regulating the ribosomal RNA (rRNA) pool. The chain is rRNA 2'-O-methyltransferase fibrillarin from Caenorhabditis elegans.